The sequence spans 319 residues: Acetyl-coenzyme A carboxylase carboxyl transferase subunit alpha (319 aa).

A CoA carboxyltransferase C-terminal domain is found at 35–296 (NIDEEVHRLR…KAQLLEDLAD (262 aa)).

Belongs to the AccA family. In terms of assembly, acetyl-CoA carboxylase is a heterohexamer composed of biotin carboxyl carrier protein (AccB), biotin carboxylase (AccC) and two subunits each of ACCase subunit alpha (AccA) and ACCase subunit beta (AccD).

It is found in the cytoplasm. It carries out the reaction N(6)-carboxybiotinyl-L-lysyl-[protein] + acetyl-CoA = N(6)-biotinyl-L-lysyl-[protein] + malonyl-CoA. It participates in lipid metabolism; malonyl-CoA biosynthesis; malonyl-CoA from acetyl-CoA: step 1/1. In terms of biological role, component of the acetyl coenzyme A carboxylase (ACC) complex. First, biotin carboxylase catalyzes the carboxylation of biotin on its carrier protein (BCCP) and then the CO(2) group is transferred by the carboxyltransferase to acetyl-CoA to form malonyl-CoA. The polypeptide is Acetyl-coenzyme A carboxylase carboxyl transferase subunit alpha (Salmonella dublin (strain CT_02021853)).